The chain runs to 442 residues: ATP-dependent RNA helicase SUB2 (442 aa).

A Q motif motif is present at residues 59–87; sequence TGFRDFLLKPELLRAISDLGFEHPSEVQQ. Residues 90-265 enclose the Helicase ATP-binding domain; the sequence is IPQAILGTDV…KKFMQSPLEI (176 aa). Position 103–110 (103–110) interacts with ATP; it reads AKSGMGKT. Positions 212–215 match the DECD box motif; it reads DECD. Residues 277–438 form the Helicase C-terminal domain; that stretch reads GLQQFYLKLE…TLPETVDPAT (162 aa).

It belongs to the DEAD box helicase family. DECD subfamily.

The protein resides in the nucleus. The catalysed reaction is ATP + H2O = ADP + phosphate + H(+). In terms of biological role, ATP-binding RNA helicase involved in transcription elongation and required for the export of mRNA out of the nucleus. SUB2 also plays a role in pre-mRNA splicing and spliceosome assembly. May be involved in rDNA and telomeric silencing, and maintenance of genome integrity. This chain is ATP-dependent RNA helicase SUB2 (SUB2), found in Cryptococcus neoformans var. neoformans serotype D (strain JEC21 / ATCC MYA-565) (Filobasidiella neoformans).